A 176-amino-acid chain; its full sequence is Ribosome maturation factor RimM (176 aa).

Residues Glu-104–Ile-176 enclose the PRC barrel domain.

It belongs to the RimM family. As to quaternary structure, binds ribosomal protein uS19.

Its subcellular location is the cytoplasm. Functionally, an accessory protein needed during the final step in the assembly of 30S ribosomal subunit, possibly for assembly of the head region. Essential for efficient processing of 16S rRNA. May be needed both before and after RbfA during the maturation of 16S rRNA. It has affinity for free ribosomal 30S subunits but not for 70S ribosomes. The sequence is that of Ribosome maturation factor RimM from Thermotoga maritima (strain ATCC 43589 / DSM 3109 / JCM 10099 / NBRC 100826 / MSB8).